The sequence spans 291 residues: Presqualene diphosphate synthase (291 aa).

The tract at residues 1–23 is disordered; it reads MTSAMKKIQPEAFSEKSSDSQAS.

Belongs to the phytoene/squalene synthase family. HpnD subfamily.

The catalysed reaction is 2 (2E,6E)-farnesyl diphosphate = presqualene diphosphate + diphosphate. The protein operates within secondary metabolite biosynthesis; hopanoid biosynthesis. Involved in the biosynthesis of the hopanoid precursor squalene (SQ) from farnesyl diphosphate (FPP). Catalyzes the first step, the formation of presqualene diphosphate (PSPP) from two molecules of FPP. The protein is Presqualene diphosphate synthase of Zymomonas mobilis subsp. mobilis (strain ATCC 31821 / ZM4 / CP4).